A 59-amino-acid chain; its full sequence is Putative HTH-type transcriptional regulator YneL (59 aa).

In terms of domain architecture, HTH araC/xylS-type spans 1 to 59 (MSPLRYQKWLRLNEVRRQMLNEHYDVTTAAYAVGYESYPISVGNIRGCLESHPREILPG). The segment at residues 26–49 (VTTAAYAVGYESYPISVGNIRGCL) is a DNA-binding region (H-T-H motif).

This is Putative HTH-type transcriptional regulator YneL (yneL) from Escherichia coli (strain K12).